Reading from the N-terminus, the 404-residue chain is Immediate early response gene 5-like protein (404 aa).

Disordered regions lie at residues 86 to 107 (AADF…EPAA), 160 to 231 (AALQ…APAS), and 308 to 327 (QEEE…EPPG). Over residues 177 to 194 (PLQPGPAPLPLPLPPPAP) the composition is skewed to pro residues. Residues 195–231 (AALCPRDPRAPAACSAPPGAAPPAAAASPPASPAPAS) are compositionally biased toward low complexity. Positions 308–318 (QEEEEDDEEDA) are enriched in acidic residues.

This sequence belongs to the IER family.

This is Immediate early response gene 5-like protein (IER5L) from Homo sapiens (Human).